The sequence spans 231 residues: Ribose-5-phosphate isomerase A (231 aa).

Residues 32-35 (TGST), 85-88 (DGAD), and 98-101 (KGGG) each bind substrate. The Proton acceptor role is filled by E107. K125 provides a ligand contact to substrate.

It belongs to the ribose 5-phosphate isomerase family. In terms of assembly, homodimer.

It carries out the reaction aldehydo-D-ribose 5-phosphate = D-ribulose 5-phosphate. It participates in carbohydrate degradation; pentose phosphate pathway; D-ribose 5-phosphate from D-ribulose 5-phosphate (non-oxidative stage): step 1/1. Functionally, catalyzes the reversible conversion of ribose-5-phosphate to ribulose 5-phosphate. The protein is Ribose-5-phosphate isomerase A of Paraburkholderia phytofirmans (strain DSM 17436 / LMG 22146 / PsJN) (Burkholderia phytofirmans).